A 609-amino-acid chain; its full sequence is Indole-3-acetic acid-amido synthetase GH3.17 (609 aa).

Belongs to the IAA-amido conjugating enzyme family.

Its function is as follows. Catalyzes the synthesis of indole-3-acetic acid (IAA)-amino acid conjugates, providing a mechanism for the plant to cope with the presence of excess auxin. Strongly reactive with Glu, Gln, Trp, Asp, Ala, Leu, Phe, Gly, Tyr, Met, Ile and Val. Appears to favor Glu over Asp while the other GH3 favor Asp over Glu. Little or no product formation with His, Ser, Thr, Arg, Lys, or Cys. Also active on pyruvic and butyric acid analogs of IAA, PAA and the synthetic auxin naphthaleneacetic acid (NAA). The two chlorinated synthetic auxin herbicides 2,4-D and 3,6-dichloro-o-anisic acid (dicamba) cannot be used as substrates. The polypeptide is Indole-3-acetic acid-amido synthetase GH3.17 (GH3.17) (Arabidopsis thaliana (Mouse-ear cress)).